The following is a 420-amino-acid chain: Protein disulfide isomerase CRELD1 (420 aa).

A signal peptide spans 1–29; it reads MAPRSSRGIAPAMLCGLSLFLGFPGLVWV. Over 30–362 the chain is Extracellular; it reads QISVPPQSSP…GFFSEMTEDE (333 aa). The CXXC signature appears at 46–49; it reads CHTC. 4 disulfide bridges follow: cysteine 46–cysteine 49, cysteine 155–cysteine 169, cysteine 163–cysteine 181, and cysteine 183–cysteine 192. Positions 153-193 constitute an EGF-like 1 domain; sequence LPCPGGAERPCGGYGHCEGEGTRGGSGHCDCQAGYGGEACG. Residue asparagine 205 is glycosylated (N-linked (GlcNAc...) asparagine). FU repeat units lie at residues 208–255 and 268–315; these read HLVC…ERAS and SYEC…AVCP. The short motif at 278 to 281 is the CXXC element; that stretch reads CLGC. Intrachain disulfides connect cysteine 278–cysteine 281, cysteine 309–cysteine 321, cysteine 314–cysteine 330, and cysteine 332–cysteine 343. An EGF-like 2; calcium-binding domain is found at 305-344; it reads DVDECETAVCPGENQQCENTEGSYRCICADGYKQMEGICV. A helical transmembrane segment spans residues 363-383; that stretch reads LVVLQQMFFGVIICALATLAA. A topological domain (cytoplasmic) is located at residue lysine 384. Residues 385–405 form a helical membrane-spanning segment; sequence GDLVFTAIFIGAVAAMTGYWL. Topologically, residues 406–420 are extracellular; the sequence is SERSDRVLEGFIKGR.

This sequence belongs to the CRELD family.

The protein localises to the membrane. It catalyses the reaction Catalyzes the rearrangement of -S-S- bonds in proteins.. Protein disulfide isomerase. Promotes the localization of acetylcholine receptors (AChRs) to the plasma membrane. This chain is Protein disulfide isomerase CRELD1 (CRELD1), found in Bos taurus (Bovine).